Consider the following 549-residue polypeptide: Glucose-6-phosphate isomerase (549 aa).

The active-site Proton donor is E355. Active-site residues include H387 and K515.

This sequence belongs to the GPI family.

Its subcellular location is the cytoplasm. It carries out the reaction alpha-D-glucose 6-phosphate = beta-D-fructose 6-phosphate. The protein operates within carbohydrate biosynthesis; gluconeogenesis. It functions in the pathway carbohydrate degradation; glycolysis; D-glyceraldehyde 3-phosphate and glycerone phosphate from D-glucose: step 2/4. In terms of biological role, catalyzes the reversible isomerization of glucose-6-phosphate to fructose-6-phosphate. In Haemophilus influenzae (strain PittGG), this protein is Glucose-6-phosphate isomerase.